The chain runs to 805 residues: Ribosome biogenesis protein ERB1 (805 aa).

Residues 1–105 (MVKGRKSQKA…SDFSEDDTKS (105 aa)) are disordered. The span at 8-22 (QKADKVTKAKKRVAD) shows a compositional bias: basic and acidic residues. The segment covering 23 to 75 (EVDESESEPELQVEGLIDAEAESEDDESFESAEENASAEEDEEDEEDEEDSDA) has biased composition (acidic residues). The segment at 264–382 (RFVPSKNEAK…LRKVPGYTES (119 aa)) is required for interaction with NOP7. The tract at residues 382-418 (SVRERFERSLDLYLAPRMRKNKLNIDPESLIPELPSP) is required for interaction with YTM1. WD repeat units follow at residues 434–473 (GHEGKIRTLSIDPTGIWLATGSDDGSVRIWEILTGREVYR), 482–522 (NPED…YDIE), 590–632 (VCKK…TQSP), 635–673 (KSKGIIMDAKFHPFKPQLFVCSQRYVRIYDLSQQVLVKK), 676–715 (PGARWLSNIDIHPRGDNLIASSYDKRVLWHDLDLAATPYK), 719–758 (YHDKAVRSTTFHKKLPLFCSAADDGFIHIFHATVYDDMMK), and 775–805 (GHLGVLDTIWHPKEAWLFSAGADNTARMWTT).

The protein belongs to the WD repeat BOP1/ERB1 family. As to quaternary structure, component of the NOP7 complex, composed of ERB1, NOP7 and YTM1. The complex is held together by ERB1, which interacts with NOP7 via its N-terminal domain and with YTM1 via a high-affinity interaction between the seven-bladed beta-propeller domains of the 2 proteins. The NOP7 complex associates with the 66S pre-ribosome.

The protein resides in the nucleus. The protein localises to the nucleolus. Its subcellular location is the nucleoplasm. Its function is as follows. Component of the NOP7 complex, which is required for maturation of the 25S and 5.8S ribosomal RNAs and formation of the 60S ribosome. This Candida glabrata (strain ATCC 2001 / BCRC 20586 / JCM 3761 / NBRC 0622 / NRRL Y-65 / CBS 138) (Yeast) protein is Ribosome biogenesis protein ERB1.